The sequence spans 245 residues: 8-amino-3,8-dideoxy-manno-octulosonate cytidylyltransferase (245 aa).

The protein belongs to the KdsB family.

The protein resides in the cytoplasm. It catalyses the reaction 8-amino-3,8-dideoxy-alpha-D-manno-octulosonate + CTP = CMP-8-amino-3,8-dideoxy-alpha-D-manno-oct-2-ulosonate + diphosphate. It participates in bacterial outer membrane biogenesis; lipopolysaccharide biosynthesis. Activates KDO8N (a required 8-carbon sugar) for incorporation into bacterial lipopolysaccharide in the Shewanella genus. The sequence is that of 8-amino-3,8-dideoxy-manno-octulosonate cytidylyltransferase from Shewanella halifaxensis (strain HAW-EB4).